The primary structure comprises 222 residues: UPF0758 protein YicR (222 aa).

Positions 100–222 (PLLSPEMTRE…YVSFAERGWI (123 aa)) constitute an MPN domain. 3 residues coordinate Zn(2+): His-171, His-173, and Asp-184. A JAMM motif motif is present at residues 171 to 184 (HNHPSGCAEPSKAD).

Belongs to the UPF0758 family. YicR subfamily.

The sequence is that of UPF0758 protein YicR from Shigella dysenteriae serotype 1 (strain Sd197).